Here is a 1716-residue protein sequence, read N- to C-terminus: DNA-directed RNA polymerase I subunit RPA1 (1716 aa).

Zn(2+) contacts are provided by C64, C67, C74, H77, C104, and C107. The segment at 110–201 (LTCPRAAIHL…VAHFWKTHMA (92 aa)) is clamp. Zn(2+) contacts are provided by C205 and C208. The clamp stretch occupies residues 327-433 (FTNGQTVNLQ…IRQILEKKEG (107 aa)). A rudder region spans residues 410–423 (DSDMDKLMLEKYPG). DNA-binding residues include K431, R436, and R443. Positions 475–549 (YPQPVTPWNV…QGAKVVCRHV (75 aa)) are involved in RRN3 binding to Pol I complex. Residue R559 participates in RNA binding. Residues D595, D597, and D599 each coordinate Mg(2+). D599 provides a ligand contact to RNA. The interval 812–890 (KPNADVMRQR…NEINKACMPF (79 aa)) is funnel. Residues 967–1008 (RPPEFFFHCMAGREGLVDTAVKTSRSGYLQRCIIKHLEGLVI) are bridging helix. The tract at residues 1067–1162 (ADPQKVLRHF…SLSVWRPDIH (96 aa)) is mediates the interaction with TOP2A. A trigger loop region spans residues 1214–1255 (PGEAVGLLAAQSIGEPSTQMTLNTFHFAGRGEMNVTLGIPRL). Residue R1256 participates in DNA binding. Residues 1368–1493 (ASAFRSVNTR…RHSRPQGAEA (126 aa)) are disordered. Residues 1380–1397 (TQKDLDDTEDSGRNRREE) show a composition bias toward basic and acidic residues. Composition is skewed to acidic residues over residues 1398–1419 (ERDE…DADA) and 1429–1451 (EEEV…VQEE). Residues 1452 to 1464 (ENIKGEGAHQTHE) show a composition bias toward basic and acidic residues. Residues 1465–1477 (PDEEEGSGLEEES) are compositionally biased toward acidic residues.

Belongs to the RNA polymerase beta' chain family. As to quaternary structure, component of the RNA polymerase I (Pol I) complex consisting of 13 subunits: a ten-subunit catalytic core composed of POLR1A/RPA1, POLR1B/RPA2, POLR1C/RPAC1, POLR1D/RPAC2, POLR1H/RPA12, POLR2E/RPABC1, POLR2F/RPABC2, POLR2H/RPABC3, POLR2K/RPABC4 and POLR2L/RPABC5; a mobile stalk subunit POLR1F/RPA43 protruding from the core and additional subunits homologous to general transcription factors POLR1E/RPA49 and POLR1G/RPA34. Part of Pol I pre-initiation complex (PIC), in which Pol I core assembles with RRN3 and promoter-bound UTBF and SL1/TIF-IB complex. Interacts (via dock II domain) with TOP2A; this interaction may assist Pol I transcription initiation by releasing supercoils occurring during DNA unwinding. Interacts with CAVIN1; this interaction induces the dissociation of Pol I complex paused at rDNA terminator sequences. Interacts with MYO1C. Interacts with ERBB2. Interacts with DDX11. Interacts with RECQL5. The cofactor is Mg(2+). Phosphorylated.

It localises to the nucleus. Its subcellular location is the nucleolus. It is found in the chromosome. It carries out the reaction RNA(n) + a ribonucleoside 5'-triphosphate = RNA(n+1) + diphosphate. Catalytic core component of RNA polymerase I (Pol I), a DNA-dependent RNA polymerase which synthesizes ribosomal RNA precursors using the four ribonucleoside triphosphates as substrates. Transcribes 47S pre-rRNAs from multicopy rRNA gene clusters, giving rise to 5.8S, 18S and 28S ribosomal RNAs. Pol I-mediated transcription cycle proceeds through transcription initiation, transcription elongation and transcription termination stages. During transcription initiation, Pol I pre-initiation complex (PIC) is recruited by the selectivity factor 1 (SL1/TIF-IB) complex bound to the core promoter that precedes an rDNA repeat unit. The PIC assembly bends the promoter favoring the formation of the transcription bubble and promoter escape. Once the polymerase has escaped from the promoter it enters the elongation phase during which RNA is actively polymerized, based on complementarity with the template DNA strand. Highly processive, assembles in structures referred to as 'Miller trees' where many elongating Pol I complexes queue and transcribe the same rDNA coding regions. At terminator sequences downstream of the rDNA gene, PTRF interacts with Pol I and halts Pol I transcription leading to the release of the RNA transcript and polymerase from the DNA. Forms Pol I active center together with the second largest subunit POLR1B/RPA2. Appends one nucleotide at a time to the 3' end of the nascent RNA, with POLR1A/RPA1 contributing a Mg(2+)-coordinating DxDGD motif, and POLR1B/RPA2 participating in the coordination of a second Mg(2+) ion and providing lysine residues believed to facilitate Watson-Crick base pairing between the incoming nucleotide and the template base. Typically, Mg(2+) ions direct a 5' nucleoside triphosphate to form a phosphodiester bond with the 3' hydroxyl of the preceding nucleotide of the nascent RNA, with the elimination of pyrophosphate. Has proofreading activity: Pauses and backtracks to allow the cleavage of a missincorporated nucleotide via POLR1H/RPA12. High Pol I processivity is associated with decreased transcription fidelity. The chain is DNA-directed RNA polymerase I subunit RPA1 from Rattus norvegicus (Rat).